A 162-amino-acid chain; its full sequence is Phosphopantetheine adenylyltransferase (162 aa).

Position 10 (threonine 10) interacts with substrate. Residues 10–11 (TF) and histidine 18 contribute to the ATP site. Lysine 42, leucine 74, and arginine 88 together coordinate substrate. Residues 89-91 (GLR), glutamate 99, and 124-130 (FSCISST) each bind ATP.

It belongs to the bacterial CoaD family. In terms of assembly, homohexamer. Requires Mg(2+) as cofactor.

The protein localises to the cytoplasm. The catalysed reaction is (R)-4'-phosphopantetheine + ATP + H(+) = 3'-dephospho-CoA + diphosphate. Its pathway is cofactor biosynthesis; coenzyme A biosynthesis; CoA from (R)-pantothenate: step 4/5. Reversibly transfers an adenylyl group from ATP to 4'-phosphopantetheine, yielding dephospho-CoA (dPCoA) and pyrophosphate. In Francisella tularensis subsp. novicida (strain U112), this protein is Phosphopantetheine adenylyltransferase.